The chain runs to 335 residues: Glucokinase (335 aa).

11 to 16 contributes to the ATP binding site; the sequence is ADIGGT.

Belongs to the bacterial glucokinase family.

It localises to the cytoplasm. The catalysed reaction is D-glucose + ATP = D-glucose 6-phosphate + ADP + H(+). This is Glucokinase from Xanthomonas campestris pv. campestris (strain 8004).